A 204-amino-acid polypeptide reads, in one-letter code: Dof zinc finger protein DOF3.1 (204 aa).

Residues 1-25 (MQDPAAYYQTMMAKQQQQQQPQFAE) are disordered. The segment at 29–83 (LKCPRCDSPNTKFCYYNNYNLSQPRHFCKSCRRYWTKGGALRNVPVGGGSRKNAT) adopts a Dof-type zinc-finger fold. The Zn(2+) site is built by Cys-31, Cys-34, Cys-56, and Cys-59. Disordered regions lie at residues 70 to 128 (RNVP…TRML) and 182 to 204 (RTEPGNNNNNPWTDLAMNRAEKN). A compositionally biased stretch (low complexity) spans 84 to 102 (KRSTSSSSSASSPSNSSQN). The span at 106–124 (KNPDPDPDPRNSQKPDLDP) shows a compositional bias: basic and acidic residues.

It localises to the nucleus. Transcription factor that binds specifically to a 5'-AA[AG]G-3' consensus core sequence. The chain is Dof zinc finger protein DOF3.1 (DOF3.1) from Arabidopsis thaliana (Mouse-ear cress).